Here is a 20-residue protein sequence, read N- to C-terminus: Cytochrome P450 2A7 (20 aa).

It belongs to the cytochrome P450 family. Requires heme as cofactor.

It is found in the endoplasmic reticulum membrane. It localises to the microsome membrane. The catalysed reaction is an organic molecule + reduced [NADPH--hemoprotein reductase] + O2 = an alcohol + oxidized [NADPH--hemoprotein reductase] + H2O + H(+). Exhibits a high coumarin 7-hydroxylase activity. This chain is Cytochrome P450 2A7 (CYP2A7), found in Papio sp. (Baboon).